The following is a 122-amino-acid chain: Large ribosomal subunit protein uL14 (122 aa).

This sequence belongs to the universal ribosomal protein uL14 family. As to quaternary structure, part of the 50S ribosomal subunit. Forms a cluster with proteins L3 and L19. In the 70S ribosome, L14 and L19 interact and together make contacts with the 16S rRNA in bridges B5 and B8.

Functionally, binds to 23S rRNA. Forms part of two intersubunit bridges in the 70S ribosome. The polypeptide is Large ribosomal subunit protein uL14 (Ectopseudomonas mendocina (strain ymp) (Pseudomonas mendocina)).